Consider the following 655-residue polypeptide: Acetyl-coenzyme A synthetase (655 aa).

Residues 196–199 and T316 each bind CoA; that span reads RGGR. Residues 392–394, 416–421, D508, and R523 contribute to the ATP site; these read GEP and DTWWQT. CoA is bound at residue S531. Residue R534 coordinates ATP. Mg(2+) contacts are provided by V545, H547, and V550. K620 carries the N6-acetyllysine modification.

It belongs to the ATP-dependent AMP-binding enzyme family. Requires Mg(2+) as cofactor. Acetylated. Deacetylation by the SIR2-homolog deacetylase activates the enzyme.

It carries out the reaction acetate + ATP + CoA = acetyl-CoA + AMP + diphosphate. Functionally, catalyzes the conversion of acetate into acetyl-CoA (AcCoA), an essential intermediate at the junction of anabolic and catabolic pathways. AcsA undergoes a two-step reaction. In the first half reaction, AcsA combines acetate with ATP to form acetyl-adenylate (AcAMP) intermediate. In the second half reaction, it can then transfer the acetyl group from AcAMP to the sulfhydryl group of CoA, forming the product AcCoA. This is Acetyl-coenzyme A synthetase from Nitrosomonas europaea (strain ATCC 19718 / CIP 103999 / KCTC 2705 / NBRC 14298).